The primary structure comprises 453 residues: MSFSAVILAAGKGTRMYSNVPKVLHTLAGKPMAKHVIDTCSDLGASHIHLVYGHGGDTMQQVLADEPVSWILQAEQLGTGHAVNQASSGLADNEKVLILYGDVPLISGDTLTNLLDAQPDGGIALLTVVLDNPVGYGRIVRRNGPVVAIVEQKDASEEQKLIKEINTGVMVANGGDLKRWLGQLKNENSQGEYYLTDIIAIAHDEGRAVEAVHPVNPIEVEGVNNRIQLARLERAYQAMQAERLLEQGVMLRDPSRFDLRGKLQCGTDVEIDVNVIIEGNVSIGNNVLIGTGCVLKDCEIDDNSVIRPYSVIEGATVGEDCTVGPFTRLRPGAELVGDSHVGNFVEMKKSRLGRGSKANHLTYLGDADIGDRVNIGAGTITCNYDGVNKFKTEIGDDVFVGSDTQLIAPVKIGKGATIGAGATINRDIGEGELVITRAPARTIKGWKRPVKQK.

A pyrophosphorylase region spans residues 1-226; the sequence is MSFSAVILAA…PIEVEGVNNR (226 aa). Residues 8–11, K22, Q73, 78–79, 100–102, G137, E151, N166, and N224 each bind UDP-N-acetyl-alpha-D-glucosamine; these read LAAG, GT, and YGD. Position 102 (D102) interacts with Mg(2+). Mg(2+) is bound at residue N224. A linker region spans residues 227 to 247; that stretch reads IQLARLERAYQAMQAERLLEQ. The N-acetyltransferase stretch occupies residues 248-453; it reads GVMLRDPSRF…KGWKRPVKQK (206 aa). UDP-N-acetyl-alpha-D-glucosamine is bound by residues R330 and K348. H360 serves as the catalytic Proton acceptor. UDP-N-acetyl-alpha-D-glucosamine-binding residues include Y363 and N374. Acetyl-CoA-binding positions include A377, 383 to 384, S402, A420, and R437; that span reads NY.

This sequence in the N-terminal section; belongs to the N-acetylglucosamine-1-phosphate uridyltransferase family. It in the C-terminal section; belongs to the transferase hexapeptide repeat family. As to quaternary structure, homotrimer. Mg(2+) serves as cofactor.

It is found in the cytoplasm. The enzyme catalyses alpha-D-glucosamine 1-phosphate + acetyl-CoA = N-acetyl-alpha-D-glucosamine 1-phosphate + CoA + H(+). It carries out the reaction N-acetyl-alpha-D-glucosamine 1-phosphate + UTP + H(+) = UDP-N-acetyl-alpha-D-glucosamine + diphosphate. Its pathway is nucleotide-sugar biosynthesis; UDP-N-acetyl-alpha-D-glucosamine biosynthesis; N-acetyl-alpha-D-glucosamine 1-phosphate from alpha-D-glucosamine 6-phosphate (route II): step 2/2. It functions in the pathway nucleotide-sugar biosynthesis; UDP-N-acetyl-alpha-D-glucosamine biosynthesis; UDP-N-acetyl-alpha-D-glucosamine from N-acetyl-alpha-D-glucosamine 1-phosphate: step 1/1. It participates in bacterial outer membrane biogenesis; LPS lipid A biosynthesis. Catalyzes the last two sequential reactions in the de novo biosynthetic pathway for UDP-N-acetylglucosamine (UDP-GlcNAc). The C-terminal domain catalyzes the transfer of acetyl group from acetyl coenzyme A to glucosamine-1-phosphate (GlcN-1-P) to produce N-acetylglucosamine-1-phosphate (GlcNAc-1-P), which is converted into UDP-GlcNAc by the transfer of uridine 5-monophosphate (from uridine 5-triphosphate), a reaction catalyzed by the N-terminal domain. The chain is Bifunctional protein GlmU from Photobacterium profundum (strain SS9).